Consider the following 258-residue polypeptide: Elongation factor Ts (258 aa).

Residues 81–84 form an involved in Mg(2+) ion dislocation from EF-Tu region; sequence TDFV. Residues 216 to 258 form a disordered region; that stretch reads GLKPAEAPKVEETPPAPPEEPAPEPAPAAESKPAKKGSAKKKK. Pro residues predominate over residues 229-241; it reads PPAPPEEPAPEPA. Positions 249 to 258 are enriched in basic residues; the sequence is AKKGSAKKKK.

It belongs to the EF-Ts family.

It localises to the cytoplasm. Associates with the EF-Tu.GDP complex and induces the exchange of GDP to GTP. It remains bound to the aminoacyl-tRNA.EF-Tu.GTP complex up to the GTP hydrolysis stage on the ribosome. This chain is Elongation factor Ts, found in Synechococcus sp. (strain JA-2-3B'a(2-13)) (Cyanobacteria bacterium Yellowstone B-Prime).